The following is a 301-amino-acid chain: HTH-type transcriptional regulator AbaB (301 aa).

The HTH lysR-type domain maps to 1–58 (MDLALLRTFVTVHRAGSFTRAAALLGLSQPAVTSQIRTLERQLGRPLFLRQARGVTPT). The H-T-H motif DNA-binding region spans 18 to 37 (FTRAAALLGLSQPAVTSQIR).

It belongs to the LysR transcriptional regulatory family.

Putative regulator that may be involved in stimulating antibiotic production in S.antibioticus. This is HTH-type transcriptional regulator AbaB from Streptomyces antibioticus.